The sequence spans 119 residues: Fluoride-specific ion channel FluC (119 aa).

A run of 4 helical transmembrane segments spans residues 5-25, 34-54, 59-79, and 97-117; these read IIPL…LNLA, TGNL…AETI, WKLL…GFSL, and IFLH…IGAA. Gly-69 and Thr-72 together coordinate Na(+).

Belongs to the fluoride channel Fluc/FEX (TC 1.A.43) family.

The protein resides in the cell inner membrane. It catalyses the reaction fluoride(in) = fluoride(out). Its activity is regulated as follows. Na(+) is not transported, but it plays an essential structural role and its presence is essential for fluoride channel function. Functionally, fluoride-specific ion channel. Important for reducing fluoride concentration in the cell, thus reducing its toxicity. The protein is Fluoride-specific ion channel FluC of Neisseria meningitidis serogroup C / serotype 2a (strain ATCC 700532 / DSM 15464 / FAM18).